The chain runs to 551 residues: Chloride channel CLIC-like protein 1 (551 aa).

The N-terminal stretch at 1-18 (MLCSLLLCECLLLVAGYA) is a signal peptide. Topologically, residues 19–184 (HDDDWIDPTD…EDSFGVDPYN (166 aa)) are lumenal. The helical transmembrane segment at 185–205 (VLMVLLCLLCIVVLVATELWT) threads the bilayer. At 206 to 216 (YVRWYTQLRRV) the chain is on the cytoplasmic side. A helical transmembrane segment spans residues 217-237 (LIISFLFSLGWNWMYLYKLAF). At 238 to 329 (AQHQAEVAKM…GEFIKALMKE (92 aa)) the chain is on the lumenal side. A helical transmembrane segment spans residues 330–350 (IPALLHLPVLIIMALAILSFC). The Cytoplasmic segment spans residues 351-551 (YGAGKSVHVL…GQDPVSSPCG (201 aa)). A disordered region spans residues 363 to 415 (IGGPESEPPQALRPRDRRRQEEIDYRPDGGAGDADFHYRGQMGPTEQGPYAKT). Residues 380–389 (RRQEEIDYRP) are compositionally biased toward basic and acidic residues. S438 and S464 each carry phosphoserine. The interval 447-551 (VPDAEAREHP…GQDPVSSPCG (105 aa)) is disordered. T482 carries the post-translational modification Phosphothreonine. Residues 488 to 508 (TESSQSAKPVSGQDTSGNTEG) show a composition bias toward polar residues. A phosphoserine mark is found at S509, S524, and S532.

Belongs to the chloride channel MCLC family. As to quaternary structure, homomultimers. Interacts with mitochondrial protein PIGBOS1 (via C-terminus); the interaction occurs at the mitochondria-associated endoplasmic reticulum (ER) membrane, a zone of contact between the ER and mitochondrial membranes, but does not appear to play a role in ER-mitochondria tethering and is not affected by ER stress. Interacts with CALR. In terms of tissue distribution, expressed in the retina of the eye, with extensive expression in the lamina cribrosa, optic nerve, ganglion cell layer, inner nuclear layer, outer nuclear layer and retinal pigment epithelium.

Its subcellular location is the endoplasmic reticulum membrane. It catalyses the reaction chloride(in) = chloride(out). The enzyme catalyses bromide(in) = bromide(out). It carries out the reaction nitrate(in) = nitrate(out). The catalysed reaction is fluoride(in) = fluoride(out). Inhibited by ER lumenal Ca(2+). Its function is as follows. Anion-selective channel with Ca(2+)-dependent and voltage-independent gating. Permeable to small monovalent anions with selectivity for bromide &gt; chloride &gt; nitrate &gt; fluoride. Operates in the endoplasmic reticulum (ER) membrane where it mediates chloride efflux to compensate for the loss of positive charges from the ER lumen upon Ca(2+) release. Contributes to the maintenance of ER Ca(2+) pools and activation of unfolded protein response to prevent accumulation of misfolded proteins in the ER lumen. Particularly involved in ER homeostasis mechanisms underlying motor neurons and retinal photoreceptors survival. This Homo sapiens (Human) protein is Chloride channel CLIC-like protein 1.